Here is a 217-residue protein sequence, read N- to C-terminus: Small ribosomal subunit protein eS6 (217 aa).

The protein belongs to the eukaryotic ribosomal protein eS6 family. Phosphorylated.

The sequence is that of Small ribosomal subunit protein eS6 (RPS6) from Encephalitozoon cuniculi (strain GB-M1) (Microsporidian parasite).